Consider the following 341-residue polypeptide: tRNA N6-adenosine threonylcarbamoyltransferase (341 aa).

2 residues coordinate Fe cation: H111 and H115. Residues 134–138, D167, G180, and N276 contribute to the substrate site; that span reads LVSGG. D304 is a Fe cation binding site.

It belongs to the KAE1 / TsaD family. Fe(2+) serves as cofactor.

The protein localises to the cytoplasm. It catalyses the reaction L-threonylcarbamoyladenylate + adenosine(37) in tRNA = N(6)-L-threonylcarbamoyladenosine(37) in tRNA + AMP + H(+). Functionally, required for the formation of a threonylcarbamoyl group on adenosine at position 37 (t(6)A37) in tRNAs that read codons beginning with adenine. Is involved in the transfer of the threonylcarbamoyl moiety of threonylcarbamoyl-AMP (TC-AMP) to the N6 group of A37, together with TsaE and TsaB. TsaD likely plays a direct catalytic role in this reaction. The sequence is that of tRNA N6-adenosine threonylcarbamoyltransferase from Pseudomonas aeruginosa (strain UCBPP-PA14).